The following is a 158-amino-acid chain: Protein-export protein SecB (158 aa).

It belongs to the SecB family. As to quaternary structure, homotetramer, a dimer of dimers. One homotetramer interacts with 1 SecA dimer.

Its subcellular location is the cytoplasm. One of the proteins required for the normal export of preproteins out of the cell cytoplasm. It is a molecular chaperone that binds to a subset of precursor proteins, maintaining them in a translocation-competent state. It also specifically binds to its receptor SecA. This Rhodopseudomonas palustris (strain BisB5) protein is Protein-export protein SecB.